Here is a 359-residue protein sequence, read N- to C-terminus: Membrane-bound lytic murein transglycosylase C (359 aa).

Residues 1-16 (MKKYLALALIAPLLIS) form the signal peptide. C17 is lipidated: N-palmitoyl cysteine. C17 carries S-diacylglycerol cysteine lipidation.

The protein belongs to the transglycosylase Slt family.

It is found in the cell outer membrane. The enzyme catalyses Exolytic cleavage of the (1-&gt;4)-beta-glycosidic linkage between N-acetylmuramic acid (MurNAc) and N-acetylglucosamine (GlcNAc) residues in peptidoglycan, from either the reducing or the non-reducing ends of the peptidoglycan chains, with concomitant formation of a 1,6-anhydrobond in the MurNAc residue.. Its function is as follows. Murein-degrading enzyme. May play a role in recycling of muropeptides during cell elongation and/or cell division. The protein is Membrane-bound lytic murein transglycosylase C of Escherichia coli O157:H7.